Consider the following 441-residue polypeptide: Phenylalanine-4-hydroxylase (441 aa).

In terms of domain architecture, ACT spans 23 to 102 (FSISKGSDKI…KATTLQESSN (80 aa)). Positions 273, 278, and 318 each coordinate Fe cation.

This sequence belongs to the biopterin-dependent aromatic amino acid hydroxylase family. Homotetramer. Fe(2+) serves as cofactor.

The enzyme catalyses (6R)-L-erythro-5,6,7,8-tetrahydrobiopterin + L-phenylalanine + O2 = (4aS,6R)-4a-hydroxy-L-erythro-5,6,7,8-tetrahydrobiopterin + L-tyrosine. It catalyses the reaction (6R)-L-erythro-5,6,7,8-tetrahydrobiopterin + L-tryptophan + O2 = 5-hydroxy-L-tryptophan + (4aS,6R)-4a-hydroxy-L-erythro-5,6,7,8-tetrahydrobiopterin. It functions in the pathway amino-acid degradation; L-phenylalanine degradation; acetoacetate and fumarate from L-phenylalanine: step 1/6. In terms of biological role, catalyzes the hydroxylation of L-phenylalanine. Hydroxylates L-tryptophan to 5-hydroxy-L-tryptophan but does not hydroxylate L-tyrosine to L-DOPA. It uses D-threo-tetrahydrodictyopterin (DH4), also known as dictyoperin, as a cofactor. The polypeptide is Phenylalanine-4-hydroxylase (pah) (Dictyostelium discoideum (Social amoeba)).